The chain runs to 330 residues: MRVYITNINGQSIQSTAQLCQNTVTDVAVSLGYRELGIYCYQIHTDSESELSKRLDGIVAGLRHGDVVIFQTPTWNTTEFDEKLMNKLKLYDIKIVLFIHDVVPLMFSGNFYLMDRTIAYYNKADVVVAPSQKMIDKLRDFGMNVSKTVVQGMWDHPTQAPMFPAGLKREIHFPGNPERFSFVKEWKYDIPLKVYTWQNVELPQNVHKINYRPDEQLLMEMSQGGFGLVWMDDKDKEYQSLYCSYKLGSFLAAGIPVIVQEGIANQELIENNGLGWIVKDVEEAIMKVKNVNEDEYIELVKNVRSFNPILRKGFFTRRLLTESVFQAICD.

Threonine 16 lines the UDP pocket. Residues 106–111 (MFSGNF) are substrate protein-binding loop. UDP is bound by residues arginine 179, 211–214 (YRPD), and 244–249 (SYKLGS).

The protein belongs to the Gtf3 glucosyltransferase family. In terms of assembly, homotetramer; a dimer of dimers. In vitro glycosyltransferase activity is metal-independent. is required as a cofactor.

It functions in the pathway protein modification; protein glycosylation. Functionally, required for polymorphic O-glycosylation of the serine-rich repeat protein Fap1. Catalyzes the second step in glycosylation of the serine-rich repeat protein in this bacteria. Transfers glucose from UDP-glucose to the terminal GlcNAc moiety of 3-O-(N-acetyl-alpha-D-glucosaminyl)-L-seryl-[protein] which results from the first glycosylation step of Fap1; does not use other sugar nucleotides as substrates. In Streptococcus parasanguinis, this protein is Glucosyltransferase 3.